A 355-amino-acid chain; its full sequence is Thiamine thiazole synthase, chloroplastic (355 aa).

A chloroplast-targeting transit peptide spans Met-1–Asn-42. Residues Ala-96, Glu-116–Gln-117, Gly-124, and Val-189 contribute to the substrate site. A 2,3-didehydroalanine (Cys) modification is found at Cys-218. Substrate contacts are provided by residues Asp-220, His-235, Met-287, and Arg-297–Gly-299.

This sequence belongs to the THI4 family. As to quaternary structure, homooctamer. The cofactor is Fe cation. Post-translationally, during the catalytic reaction, a sulfide is transferred from Cys-218 to a reaction intermediate, generating a dehydroalanine residue.

It localises to the plastid. The protein resides in the chloroplast. It carries out the reaction [ADP-thiazole synthase]-L-cysteine + glycine + NAD(+) = [ADP-thiazole synthase]-dehydroalanine + ADP-5-ethyl-4-methylthiazole-2-carboxylate + nicotinamide + 3 H2O + 2 H(+). Involved in biosynthesis of the thiamine precursor thiazole. Catalyzes the conversion of NAD and glycine to adenosine diphosphate 5-(2-hydroxyethyl)-4-methylthiazole-2-carboxylic acid (ADT), an adenylated thiazole intermediate. The reaction includes an iron-dependent sulfide transfer from a conserved cysteine residue of the protein to a thiazole intermediate. The enzyme can only undergo a single turnover, which suggests it is a suicide enzyme. May have additional roles in adaptation to various stress conditions and in DNA damage tolerance. Required fot thiamine accumulation and disease resistance toward the bacterial pathogen Xanthomonas oryzae pv oryzae (Xoo) and the fungal pathogen Magnaporthe oryzae. During infection by Xoo, functions positively in the defense pathway initiated by the resistance genes XA3 and XA26 by promoting thiamine synthesis. May function upstream of the defense-related proteins peroxidases, phenylalanine ammonia-lyases and pathogenesis-related proteins. Its function is as follows. (Microbial infection) During infection by Xanthomonas oryzae pv oryzae (Xoo), THI1 interacts with the type III effector virulence factor xadA from Xoo, which is an adhesin-like outer membrane protein. This probably attenuates the function of THI1 in defense response. This is Thiamine thiazole synthase, chloroplastic from Oryza sativa subsp. japonica (Rice).